A 103-amino-acid polypeptide reads, in one-letter code: Large ribosomal subunit protein uL24 (103 aa).

Belongs to the universal ribosomal protein uL24 family. As to quaternary structure, part of the 50S ribosomal subunit.

Its function is as follows. One of two assembly initiator proteins, it binds directly to the 5'-end of the 23S rRNA, where it nucleates assembly of the 50S subunit. In terms of biological role, one of the proteins that surrounds the polypeptide exit tunnel on the outside of the subunit. The chain is Large ribosomal subunit protein uL24 from Synechococcus sp. (strain CC9311).